A 347-amino-acid chain; its full sequence is Phosphoribosylformylglycinamidine cyclo-ligase (347 aa).

This sequence belongs to the AIR synthase family.

It is found in the cytoplasm. The enzyme catalyses 2-formamido-N(1)-(5-O-phospho-beta-D-ribosyl)acetamidine + ATP = 5-amino-1-(5-phospho-beta-D-ribosyl)imidazole + ADP + phosphate + H(+). Its pathway is purine metabolism; IMP biosynthesis via de novo pathway; 5-amino-1-(5-phospho-D-ribosyl)imidazole from N(2)-formyl-N(1)-(5-phospho-D-ribosyl)glycinamide: step 2/2. The protein is Phosphoribosylformylglycinamidine cyclo-ligase of Alcanivorax borkumensis (strain ATCC 700651 / DSM 11573 / NCIMB 13689 / SK2).